The sequence spans 432 residues: Ornithine decarboxylase 1A, chloroplastic (432 aa).

Position 95 is an N6-(pyridoxal phosphate)lysine (Lys-95). Pyridoxal 5'-phosphate-binding positions include Ser-227, Gly-265, and Glu-298–Arg-301. A substrate-binding site is contributed by Tyr-341 to Asp-342. The Proton donor; shared with dimeric partner role is filled by Cys-377. Position 378 (Asp-378) interacts with substrate. Tyr-406 is a pyridoxal 5'-phosphate binding site.

Belongs to the Orn/Lys/Arg decarboxylase class-II family. In terms of assembly, homodimer. Only the dimer is catalytically active, as the active sites are constructed of residues from both monomers. Pyridoxal 5'-phosphate is required as a cofactor.

The protein resides in the plastid. Its subcellular location is the chloroplast. It catalyses the reaction L-ornithine + H(+) = putrescine + CO2. Its pathway is alkaloid biosynthesis; nicotine biosynthesis. It participates in amine and polyamine biosynthesis; putrescine biosynthesis via L-ornithine pathway; putrescine from L-ornithine: step 1/1. Its function is as follows. Involved in the biosynthesis of pyridine alkaloid natural products, leading mainly to the production of anabasine, anatabine, nicotine and nornicotine, effective deterrents against herbivores with antiparasitic and pesticide properties (neurotoxins); nornicotine serves as the precursor in the synthesis of the carcinogen compound N'-nitrosonornicotine (NNN). Catalyzes the first and rate-limiting step of polyamine biosynthesis that converts ornithine into putrescine, which is the precursor for the polyamines, spermidine and spermine. Polyamines are essential for cell proliferation and are implicated in cellular processes, ranging from DNA replication to apoptosis. This Nicotiana tabacum (Common tobacco) protein is Ornithine decarboxylase 1A, chloroplastic.